Consider the following 1287-residue polypeptide: FYVE zinc finger domain protein UPA1 (1287 aa).

The segment at 1-298 (MTIPDPANII…SSTSLSAPAE (298 aa)) is disordered. The segment covering 86 to 99 (DSSSFGSKPSSSAS) has biased composition (low complexity). Positions 115-136 (WATSSTTSHPSKASQSTLSPNA) are enriched in polar residues. Positions 128-144 (SQSTLSPNASVFKPSRS) match the PAM2 motif. 2 stretches are compositionally biased toward basic and acidic residues: residues 177 to 187 (RPDHAPLDHEQ) and 201 to 211 (KVEEQRGDHSI). Positions 212 to 235 (PHQNGLVSAQAQTASDAVSTSKYT) are enriched in polar residues. The PAM2L 1 signature appears at 239–253 (ADQEEDQDDFVYPGA). The segment covering 255-294 (SPSSGQAAVQDEQQAVTDSQTTKSLTKQESDPEASSTSLS) has biased composition (polar residues). ANK repeat units follow at residues 366–395 (NGLV…AIVE), 400–429 (EGET…DANA), 433–463 (DGWT…QIDV), and 468–497 (GAWT…ADPF). Disordered regions lie at residues 582 to 630 (NGGK…VGLP), 643 to 697 (RVGP…ASAQ), 934 to 960 (REAA…YPNS), and 977 to 1005 (TSGT…APSE). Residues 674-695 (STPTPESVLQARRGTSSVNGAS) show a composition bias toward polar residues. Residues 938 to 955 (GLDEDEDEDAADDDDDEF) show a composition bias toward acidic residues. The PAM2L 2 signature appears at 941-960 (EDEDEDAADDDDDEFIYPNS). The span at 981 to 995 (LSRPSLSQRQSSAAS) shows a compositional bias: low complexity. Residues 1055-1129 (DEEAKDCIGC…VCNGCHAELQ (75 aa)) form an FYVE-type zinc finger. 8 residues coordinate Zn(2+): Cys-1061, Cys-1064, Cys-1077, Cys-1080, Cys-1085, Cys-1088, Cys-1121, and Cys-1124. An RING-type; atypical zinc finger spans residues 1243 to 1283 (CSICMEDFVANSTIARLPCLCYFHRGCIDSWFKRGRECPVH).

Belongs to the UPA1 PAM2 domain-binding protein family. As to quaternary structure, part of large ribonucleoprotein complexes (mRNPs) containing RNA-binding proteins RRM4 and PAB1, endosome-binding protein UPA1, core scaffold protein UPA2 and associated factor GRP1. Interacts (via PAM2 motif) with PAB1 (via PABC domain). Interacts (via PAM2L motifs) with RRM4.

The protein resides in the cytoplasm. It is found in the cytoskeleton. The protein localises to the endosome. Its function is as follows. FYVE zinc finger domain protein that functions in endosomal targeting and transport of mRNAs, as well as associated ribosomes. The endosomal mRNA transport regulates polarity of the infectious hyphae by transporting a broad spectrum of cargo mRNAs from the nucleus to cell poles. Involved in chitinase CTS1 secretion. Dispensable for general endosomal functions but crucial for endosomal recruitment of RRM4. This Mycosarcoma maydis (Corn smut fungus) protein is FYVE zinc finger domain protein UPA1.